The chain runs to 503 residues: Cysteine--tRNA ligase (503 aa).

Cysteine 31 is a Zn(2+) binding site. Residues proline 33–asparagine 43 carry the 'HIGH' region motif. The Zn(2+) site is built by cysteine 225, histidine 264, and glutamate 268. A 'KMSKS' region motif is present at residues lysine 297–serine 301. An ATP-binding site is contributed by lysine 300.

The protein belongs to the class-I aminoacyl-tRNA synthetase family. Monomer. Zn(2+) serves as cofactor.

The protein resides in the cytoplasm. It catalyses the reaction tRNA(Cys) + L-cysteine + ATP = L-cysteinyl-tRNA(Cys) + AMP + diphosphate. This is Cysteine--tRNA ligase from Bartonella tribocorum (strain CIP 105476 / IBS 506).